We begin with the raw amino-acid sequence, 98 residues long: NADH-ubiquinone oxidoreductase chain 4L (98 aa).

The next 3 membrane-spanning stretches (helical) occupy residues 1-21, 29-49, and 61-81; these read MSLV…GLLM, SLLC…LMIL, and IILL…LVMV.

The protein belongs to the complex I subunit 4L family. In terms of assembly, core subunit of respiratory chain NADH dehydrogenase (Complex I) which is composed of 45 different subunits.

The protein localises to the mitochondrion inner membrane. It catalyses the reaction a ubiquinone + NADH + 5 H(+)(in) = a ubiquinol + NAD(+) + 4 H(+)(out). Core subunit of the mitochondrial membrane respiratory chain NADH dehydrogenase (Complex I) which catalyzes electron transfer from NADH through the respiratory chain, using ubiquinone as an electron acceptor. Part of the enzyme membrane arm which is embedded in the lipid bilayer and involved in proton translocation. The polypeptide is NADH-ubiquinone oxidoreductase chain 4L (MT-ND4L) (Ovis aries (Sheep)).